Here is a 215-residue protein sequence, read N- to C-terminus: HTH-type transcriptional repressor FabR (215 aa).

An HTH tetR-type domain is found at 10–70 (KTRRSLVEAA…TMVDESGLML (61 aa)). A DNA-binding region (H-T-H motif) is located at residues 33–52 (SLREVAREAVIAPTSFYRHF).

In terms of assembly, homodimer.

Its subcellular location is the cytoplasm. In terms of biological role, represses the transcription of fabB, involved in unsaturated fatty acid (UFA) biosynthesis. By controlling UFA production, FabR directly influences the physical properties of the membrane bilayer. This is HTH-type transcriptional repressor FabR from Escherichia coli (strain K12 / MC4100 / BW2952).